The sequence spans 231 residues: Cytochrome c oxidase assembly factor 7 (231 aa).

Sel1-like repeat units follow at residues 34-66 (PDGC…DQNE), 68-104 (SESC…NKGG), 108-145 (IDSC…DGNF), 146-182 (AASC…SLGH), and 183-218 (MWGC…DLHR).

It belongs to the hcp beta-lactamase family.

The protein localises to the mitochondrion intermembrane space. Functionally, may be required for assembly of mitochondrial respiratory chain complexes. The sequence is that of Cytochrome c oxidase assembly factor 7 (coa7) from Xenopus tropicalis (Western clawed frog).